A 74-amino-acid polypeptide reads, in one-letter code: Kappa-scoloptoxin(07)-Ssm2e (74 aa).

Positions 1–19 (MLVFYALLFVSVFSNTVMG) are cleaved as a signal peptide. Residues 20–41 (ATIDMPIPKPILREAIEEIDVN) constitute a propeptide that is removed on maturation.

Belongs to the scoloptoxin-07 family. Contains 3 disulfide bonds. As to expression, expressed by the venom gland.

It localises to the secreted. Inhibits voltage-gated potassium channels. This Scolopendra mutilans (Chinese red-headed centipede) protein is Kappa-scoloptoxin(07)-Ssm2e.